The sequence spans 143 residues: Peptide methionine sulfoxide reductase B9 (143 aa).

A MsrB domain is found at 19-140 (DQDWRAILSP…NSVSLKFSEI (122 aa)). Residues cysteine 58, cysteine 61, cysteine 104, and cysteine 107 each contribute to the Zn(2+) site. An intrachain disulfide couples cysteine 76 to cysteine 129. Catalysis depends on cysteine 129, which acts as the Nucleophile.

The protein belongs to the MsrB Met sulfoxide reductase family. Zn(2+) serves as cofactor.

Its subcellular location is the cytoplasm. The protein resides in the cytosol. It catalyses the reaction L-methionyl-[protein] + [thioredoxin]-disulfide + H2O = L-methionyl-(R)-S-oxide-[protein] + [thioredoxin]-dithiol. Functionally, catalyzes the reduction of methionine sulfoxide (MetSO) to methionine in proteins. Plays a protective role against oxidative stress by restoring activity to proteins that have been inactivated by methionine oxidation. MSRB family specifically reduces the MetSO R-enantiomer. The chain is Peptide methionine sulfoxide reductase B9 (MSRB9) from Arabidopsis thaliana (Mouse-ear cress).